A 628-amino-acid chain; its full sequence is 1-deoxy-D-xylulose-5-phosphate synthase (628 aa).

Residues His-77 and 118 to 120 each bind thiamine diphosphate; that span reads GHS. Residue Asp-150 participates in Mg(2+) binding. Thiamine diphosphate-binding positions include 151-152, Asn-180, Tyr-288, and Glu-369; that span reads GA. Asn-180 is a binding site for Mg(2+).

The protein belongs to the transketolase family. DXPS subfamily. As to quaternary structure, homodimer. Requires Mg(2+) as cofactor. The cofactor is thiamine diphosphate.

The catalysed reaction is D-glyceraldehyde 3-phosphate + pyruvate + H(+) = 1-deoxy-D-xylulose 5-phosphate + CO2. The protein operates within metabolic intermediate biosynthesis; 1-deoxy-D-xylulose 5-phosphate biosynthesis; 1-deoxy-D-xylulose 5-phosphate from D-glyceraldehyde 3-phosphate and pyruvate: step 1/1. In terms of biological role, catalyzes the acyloin condensation reaction between C atoms 2 and 3 of pyruvate and glyceraldehyde 3-phosphate to yield 1-deoxy-D-xylulose-5-phosphate (DXP). In Aquifex aeolicus (strain VF5), this protein is 1-deoxy-D-xylulose-5-phosphate synthase.